Consider the following 129-residue polypeptide: uncharacterized protein (129 aa).

This is an uncharacterized protein from Mycoplasma genitalium (strain ATCC 33530 / DSM 19775 / NCTC 10195 / G37) (Mycoplasmoides genitalium).